Here is a 569-residue protein sequence, read N- to C-terminus: Laccase-14 (569 aa).

An N-terminal signal peptide occupies residues 1–33 (MEFKLNIPNTIIKTLQTIVFFLFVLLAFQIAEA). 2 consecutive Plastocyanin-like domains span residues 41-157 (KIKS…PKRG) and 167-320 (REIP…YKGD). An N-linked (GlcNAc...) asparagine glycan is attached at asparagine 87. Histidine 91, histidine 93, histidine 136, and histidine 138 together coordinate Cu cation. N-linked (GlcNAc...) asparagine glycosylation is found at asparagine 190, asparagine 249, asparagine 336, asparagine 374, asparagine 395, asparagine 430, and asparagine 452. One can recognise a Plastocyanin-like 3 domain in the interval 420-553 (DFPRNPPTKF…NTVFIVKDGP (134 aa)). Cu cation contacts are provided by histidine 470, histidine 473, histidine 475, histidine 532, cysteine 533, histidine 534, histidine 538, and methionine 543.

This sequence belongs to the multicopper oxidase family. Cu cation serves as cofactor. As to expression, expressed at low levels in flowers and siliques.

It is found in the secreted. Its subcellular location is the extracellular space. The protein resides in the apoplast. It catalyses the reaction 4 hydroquinone + O2 = 4 benzosemiquinone + 2 H2O. Lignin degradation and detoxification of lignin-derived products. The polypeptide is Laccase-14 (LAC14) (Arabidopsis thaliana (Mouse-ear cress)).